The following is a 243-amino-acid chain: MSLVLLPAVDVADGQAVRLVQGKAGSETTYGSPRDAALAWQNDGAEWVHLVDLDAAFGRGSNRELLAQVVGELDVKVELSGGIRDDEALTAALATGCARVNLGTAALEDPEWCASAIARHGERVAVGLDVEIVEGAHRLRGRGWVSDGGDLWEVLERLRAQGCSRYVVTDVTKDGTLTGPNLELLAQVAGVANAPVIASGGVSSLDDLRAIAELTGAGVEGAIVGKALYAGRFTLPDAIAAVS.

Asp-10 acts as the Proton acceptor in catalysis. Catalysis depends on Asp-129, which acts as the Proton donor.

Belongs to the HisA/HisF family.

The protein resides in the cytoplasm. The catalysed reaction is 1-(5-phospho-beta-D-ribosyl)-5-[(5-phospho-beta-D-ribosylamino)methylideneamino]imidazole-4-carboxamide = 5-[(5-phospho-1-deoxy-D-ribulos-1-ylimino)methylamino]-1-(5-phospho-beta-D-ribosyl)imidazole-4-carboxamide. It carries out the reaction N-(5-phospho-beta-D-ribosyl)anthranilate = 1-(2-carboxyphenylamino)-1-deoxy-D-ribulose 5-phosphate. Its pathway is amino-acid biosynthesis; L-histidine biosynthesis; L-histidine from 5-phospho-alpha-D-ribose 1-diphosphate: step 4/9. It functions in the pathway amino-acid biosynthesis; L-tryptophan biosynthesis; L-tryptophan from chorismate: step 3/5. In terms of biological role, involved in both the histidine and tryptophan biosynthetic pathways. The polypeptide is Phosphoribosyl isomerase A (Mycobacteroides abscessus (strain ATCC 19977 / DSM 44196 / CCUG 20993 / CIP 104536 / JCM 13569 / NCTC 13031 / TMC 1543 / L948) (Mycobacterium abscessus)).